An 82-amino-acid polypeptide reads, in one-letter code: DNA-directed RNA polymerase subunit omega (82 aa).

This sequence belongs to the RNA polymerase subunit omega family. In cyanobacteria the RNAP catalytic core is composed of 2 alpha, 1 beta, 1 beta', 1 gamma and 1 omega subunit. When a sigma factor is associated with the core the holoenzyme is formed, which can initiate transcription.

The catalysed reaction is RNA(n) + a ribonucleoside 5'-triphosphate = RNA(n+1) + diphosphate. Its function is as follows. Promotes RNA polymerase assembly. Latches the N- and C-terminal regions of the beta' subunit thereby facilitating its interaction with the beta and alpha subunits. The protein is DNA-directed RNA polymerase subunit omega of Synechococcus sp. (strain CC9902).